The primary structure comprises 466 residues: MSDINHAGSDLIFELEDRPPFHQALVGAITHLLAIFVPMVTPALIVGAALQLSAETTAYLVSMAMIASGIGTWLQVNRYGIVGSGLLSIQSVNFSFVTVMIALGSSMKSDGFHEELIMSSLLGVSFVGAFLVVGSSFILPYLRRVITPTVSGIVVLMIGLSLIKVGIIDFGGGFAAKSSGTFGNYEHLGVGLLVLIVVIGFNCCRSPLLRMGGIAIGLCVGYIASLCLGMVDFSSMRNLPLITIPHPFKYGFSFSFHQFLVVGTIYLLSVLEAVGDITATAMVSRRPIQGEEYQSRLKGGVLADGLVSVIASAVGSLPLTTFAQNNGVIQMTGVASRYVGRTIAVMLVILGLFPMIGGFFTTIPSAVLGGAMTLMFSMIAIAGIRIIITNGLKRRETLIVATSLGLGLGVSYDPEIFKILPASIYVLVENPICAGGLTAILLNIILPGGYRQENVLPGITSAEEMD.

At 1–44 the chain is on the cytoplasmic side; that stretch reads MSDINHAGSDLIFELEDRPPFHQALVGAITHLLAIFVPMVTPAL. The helical transmembrane segment at 45-65 threads the bilayer; it reads IVGAALQLSAETTAYLVSMAM. The Periplasmic portion of the chain corresponds to 66 to 74; sequence IASGIGTWL. A helical transmembrane segment spans residues 75-95; it reads QVNRYGIVGSGLLSIQSVNFS. Topologically, residues 96–99 are cytoplasmic; the sequence is FVTV. Residues 100–120 traverse the membrane as a helical segment; that stretch reads MIALGSSMKSDGFHEELIMSS. The Periplasmic portion of the chain corresponds to 121–139; that stretch reads LLGVSFVGAFLVVGSSFIL. The helical transmembrane segment at 140 to 160 threads the bilayer; the sequence is PYLRRVITPTVSGIVVLMIGL. The Cytoplasmic portion of the chain corresponds to 161–170; the sequence is SLIKVGIIDF. A helical transmembrane segment spans residues 171–191; the sequence is GGGFAAKSSGTFGNYEHLGVG. At 192–199 the chain is on the periplasmic side; it reads LLVLIVVI. A helical membrane pass occupies residues 200-220; sequence GFNCCRSPLLRMGGIAIGLCV. The Cytoplasmic segment spans residues 221-229; the sequence is GYIASLCLG. A helical membrane pass occupies residues 230-250; sequence MVDFSSMRNLPLITIPHPFKY. At 251-277 the chain is on the periplasmic side; that stretch reads GFSFSFHQFLVVGTIYLLSVLEAVGDI. The helical transmembrane segment at 278 to 298 threads the bilayer; it reads TATAMVSRRPIQGEEYQSRLK. The Cytoplasmic segment spans residues 299-317; that stretch reads GGVLADGLVSVIASAVGSL. A helical membrane pass occupies residues 318-338; it reads PLTTFAQNNGVIQMTGVASRY. The Periplasmic segment spans residues 339 to 361; sequence VGRTIAVMLVILGLFPMIGGFFT. A helical transmembrane segment spans residues 362–382; sequence TIPSAVLGGAMTLMFSMIAIA. Residue glycine 383 is a topological domain, cytoplasmic. The chain crosses the membrane as a helical span at residues 384–403; it reads IRIIITNGLKRRETLIVATS. At 404–444 the chain is on the periplasmic side; that stretch reads LGLGLGVSYDPEIFKILPASIYVLVENPICAGGLTAILLNI. The chain crosses the membrane as a helical span at residues 445 to 465; it reads ILPGGYRQENVLPGITSAEEM. Position 466 (aspartate 466) is a topological domain, cytoplasmic.

It belongs to the nucleobase:cation symporter-2 (NCS2) (TC 2.A.40) family.

It localises to the cell inner membrane. It catalyses the reaction xanthine(in) + H(+)(in) = xanthine(out) + H(+)(out). Its function is as follows. Specific, proton motive force-dependent high-affinity transporter for xanthine. This chain is Xanthine permease XanQ (xanQ), found in Escherichia coli O157:H7.